A 395-amino-acid polypeptide reads, in one-letter code: Major outer membrane porin, serovar F (395 aa).

Positions 1–22 (MKKLLKSVLVFAALSSASSLQA) are cleaved as a signal peptide.

The protein belongs to the chlamydial porin (CP) (TC 1.B.2) family. As to quaternary structure, part of a disulfide cross-linked outer membrane complex (COMC) composed of the major outer membrane porin (MOMP), the small cysteine-rich protein (OmcA) and the large cysteine-rich periplasmic protein (OmcB).

Its subcellular location is the cell outer membrane. Its function is as follows. In elementary bodies (EBs, the infectious stage, which is able to survive outside the host cell) provides the structural integrity of the outer envelope through disulfide cross-links with the small cysteine-rich protein and the large cysteine-rich periplasmic protein. It has been described in publications as the Sarkosyl-insoluble COMC (Chlamydia outer membrane complex), and serves as the functional equivalent of peptidoglycan. Permits diffusion of specific solutes through the outer membrane. The protein is Major outer membrane porin, serovar F (ompA) of Chlamydia trachomatis.